Here is a 156-residue protein sequence, read N- to C-terminus: uncharacterized protein (156 aa).

Polar residues predominate over residues Met1–Pro12. The disordered stretch occupies residues Met1–Ile27. Ser21 carries the phosphoserine modification.

It is found in the cytoplasm. The protein resides in the nucleus. This is an uncharacterized protein from Saccharomyces cerevisiae (strain ATCC 204508 / S288c) (Baker's yeast).